Consider the following 405-residue polypeptide: Alpha-N-acetylgalactosaminidase (405 aa).

Intrachain disulfides connect Cys21/Cys63, Cys25/Cys32, and Cys111/Cys142. Residues 61–62 and Lys138 each bind substrate; that span reads DD. Residue Asp140 is the Nucleophile of the active site. N-linked (GlcNAc...) asparagine glycosylation occurs at Asn161. A disulfide bond links Cys171 and Cys193. Ser172 lines the substrate pocket. Asn185 carries an N-linked (GlcNAc...) asparagine glycan. Substrate is bound by residues Arg197 and Asp201. The active-site Proton donor is Asp201. N-linked (GlcNAc...) asparagine glycosylation occurs at Asn369.

Belongs to the glycosyl hydrolase 27 family. As to quaternary structure, homodimer.

It is found in the lysosome. It catalyses the reaction Cleavage of non-reducing alpha-(1-&gt;3)-N-acetylgalactosamine residues from human blood group A and AB mucin glycoproteins, Forssman hapten and blood group A lacto series glycolipids.. The catalysed reaction is a neolactoside IV(3)-alpha-GalNAc,IV(2)-alpha-Fuc-nLc4Cer(d18:1(4E)) + H2O = a neolactoside IV(2)-alpha-Fuc-nLc4Cer(d18:1(4E)) + N-acetyl-alpha-D-galactosamine. The enzyme catalyses a neolactoside IV(3)-alpha-GalNAc,IV(2)-alpha-Fuc-nLc4Cer(d18:0) + H2O = a neolactoside IV(2)-alpha-Fuc-nLc4Cer(d18:0) + N-acetyl-alpha-D-galactosamine. It carries out the reaction a globoside IV3GalNAc-Gb4Cer + H2O = N-acetyl-alpha-D-galactosamine + a globoside Gb4Cer. Its function is as follows. Removes terminal alpha-N-acetylgalactosamine residues from glycolipids and glycopeptides. Required for the breakdown of glycolipids. The polypeptide is Alpha-N-acetylgalactosaminidase (NAGA) (Gallus gallus (Chicken)).